Reading from the N-terminus, the 341-residue chain is Transcription factor VIP1 (341 aa).

3 disordered regions span residues 1 to 33 (MEGGGRGPNQTILSEIEHMPEAPRQRISHHRRA), 59 to 106 (SLDF…PEAR), and 135 to 156 (SSGEKKKGNHHHSRSNSMDGEM). A necessary and sufficient for transient T-DNA transformation end expression region spans residues 1-162 (MEGGGRGPNQ…DGEMSSASFN (162 aa)). The span at 15–24 (EIEHMPEAPR) shows a compositional bias: basic and acidic residues. Residues 71–80 (QSQQQPQASP) show a composition bias toward low complexity. Residue serine 79 is modified to Phosphoserine. Positions 163 to 341 (IESILASVSG…PSYMDFTKRG (179 aa)) are involved in homomultimerization and histone H2A binding. Residues 194 to 257 (DPKRAKRILA…SELNTENKHL (64 aa)) form the bZIP domain. Residues 196–217 (KRAKRILANRQSAARSKERKIR) are basic motif. The short motif at 198 to 205 (AKRILANR) is the Nuclear localization signal element. The leucine-zipper stretch occupies residues 222–257 (LERKVQTLQNEATTLSAQVTMLQRGTSELNTENKHL). Residues 307–331 (SQQSAMNQFGNKTNQQMSTNGQPSL) are compositionally biased toward polar residues. The tract at residues 307–341 (SQQSAMNQFGNKTNQQMSTNGQPSLPSYMDFTKRG) is disordered.

The protein belongs to the bZIP family. As to quaternary structure, forms homomultimers. Interacts with Agrobacterium tumefaciens VirE2 and mediates its translocation to the host nucleus. Binds to VIP2. Forms a complex made of Agrobacterium VirE2, VIP1, VIP2 and single-stranded DNA (ssDNA). The interaction with KAP1 mediates its nuclear import. Binds to the H2A histone RAT5. Interacts with MPK3 and Agrobacterium virF. Forms a complex made of VIP1, VBF and Agrobacterium virE2. Interacts with SCF(VBF) E3 ubiquitin ligase complex. Binds directly to VBF. Forms heterodimers with BZIP34 and BZIP61. In terms of processing, phosphorylated by MPK3. This phosphorylation promotes nuclear localization. As to expression, mostly expressed in dividing cells, present in leaves, roots and seedlings.

Its subcellular location is the cytoplasm. It is found in the nucleus. Transcription activator that binds specifically to the VIP1 response elements (VREs) DNA sequence 5'-ACNGCT-3' found in some stress genes (e.g. TRX8 and MYB44), when phosphorylated/activated by MPK3. Required for Agrobacterium VirE2 nuclear import and tumorigenicity. Promotes transient expression of T-DNA in early stages by interacting with VirE2 in complex with the T-DNA and facilitating its translocation to the nucleus, and mediates stable genetic transformation by Agrobacterium by binding H2A histone. Prevents cell differentiation and shoot formation. Limits sulfate utilization efficiency (SUE) and sulfate uptake, especially in low-sulfur conditions. Plays a role in osmosensory response by binding to the 5'-AGCTGT/G-3' DNA sequence found in the promoters of the hypoosmolarity-responsive genes CYP707A1 and CYP707A3. Involved in the negative regulation of touch-induced root bending and salt-dependent root bending. The sequence is that of Transcription factor VIP1 from Arabidopsis thaliana (Mouse-ear cress).